Here is a 515-residue protein sequence, read N- to C-terminus: Fatty acyl-CoA reductase 1 (515 aa).

The Cytoplasmic portion of the chain corresponds to 1–465 (MVSIPEYYEG…ARKHLNKLRN (465 aa)). The helical transmembrane segment at 466 to 483 (IRYGFNTILVILIWRIFI) threads the bilayer. The Peroxisomal portion of the chain corresponds to 484 to 515 (ARSQMARNIWYFVVSLCYKFLSYFRASSTMRY).

This sequence belongs to the fatty acyl-CoA reductase family.

Its subcellular location is the peroxisome membrane. It catalyses the reaction a long-chain fatty acyl-CoA + 2 NADPH + 2 H(+) = a long-chain primary fatty alcohol + 2 NADP(+) + CoA. It carries out the reaction hexadecanoyl-CoA + 2 NADPH + 2 H(+) = hexadecan-1-ol + 2 NADP(+) + CoA. The enzyme catalyses octadecanoyl-CoA + 2 NADPH + 2 H(+) = octadecan-1-ol + 2 NADP(+) + CoA. The catalysed reaction is (9Z)-octadecenoyl-CoA + 2 NADPH + 2 H(+) = (9Z)-octadecen-1-ol + 2 NADP(+) + CoA. It catalyses the reaction (9Z,12Z)-octadecadienoyl-CoA + 2 NADPH + 2 H(+) = (9Z,12Z)-octadecadien-1-ol + 2 NADP(+) + CoA. It carries out the reaction eicosanoyl-CoA + 2 NADPH + 2 H(+) = eicosan-1-ol + 2 NADP(+) + CoA. The enzyme catalyses 16-methylheptadecanoyl-CoA + 2 NADPH + 2 H(+) = 16-methylheptadecan-1-ol + 2 NADP(+) + CoA. The catalysed reaction is 18-methylnonadecanoyl-CoA + 2 NADPH + 2 H(+) = 18-methylnonadecan-1-ol + 2 NADP(+) + CoA. Functionally, catalyzes the reduction of saturated and unsaturated C16 or C18 fatty acyl-CoA to fatty alcohols. It plays an essential role in the production of ether lipids/plasmalogens which synthesis requires fatty alcohols. In parallel, it is also required for wax monoesters production since fatty alcohols also constitute a substrate for their synthesis. This Gallus gallus (Chicken) protein is Fatty acyl-CoA reductase 1.